The chain runs to 137 residues: Large-conductance mechanosensitive channel (137 aa).

2 helical membrane passes run 10 to 30 (FAMR…AAFG) and 76 to 96 (GVFI…FVAI).

The protein belongs to the MscL family. Homopentamer.

The protein resides in the cell inner membrane. Its function is as follows. Channel that opens in response to stretch forces in the membrane lipid bilayer. May participate in the regulation of osmotic pressure changes within the cell. The sequence is that of Large-conductance mechanosensitive channel from Salmonella choleraesuis (strain SC-B67).